Reading from the N-terminus, the 1868-residue chain is MSISSDEAKEKQLVEKAELRLAIADSPQKFETNLQTFLPPLLLKLASPHASVRTAVFSALKNLISRINTLPQVQLPVRALIVQAKEPNLAAQQDSTNVRLYSLLLASKGIDRLSLQDRQQLLPLVVSNISCLTGTVAARMFHILLKLILEWVAPQESSHEQEEFVQFLQLDNDGFSFLMRQFTRFFLLVPSKQVQVSQQPLSRGYTCPGLSLTDVAFFTYDAGVTFNKEQLNKFKKAIFQFVCRGMAATQTIEQSPRMIELMEFLCVVSTDSTNLSDDAAQFMKRFPMPYENEEFITFLQTLYIGNTANGRPPVKAILQEKILSILNRSHFATTKAECISLICSIGLHSSEYKLRSLTLSFIRHVAKLNYKNLNPASSSPSSTDFSTCIVSLIRNNLHAEGWPKLQLGPQTPAFNTAILQRQLQYETLGDILKRDFELVSDLSYIEFLFESLKNDLPQFRSSIQESLLSLVGHLSILPQQSKLKLKNLLRKNLSIDEQQREDNNDAVNSIMALKFVSIKFTNAAFPFHDPEARLFNIWGTVRTNRFDIIEESFKGLQPFWFRVNNASINTSATVKTSDLLGSHLSETEFPPFREFLQVLIDQLDSEAASITRKSLNNAVRFSKQCLISNAIYGKKTMVIQDEDWSVRIDKALELDDTVVSRVNEMVQGMNDDIFIRYLTLLSNEFTATNSKGEQIAIFPYQDPIFGSVLLTLLNFVSNNVLRRLEILVPDLYHLVIMKFQSLSDNDLAVCATIIGIISTAIADSTHVKRITKIAQSQTMAETYVASYVVPRLYLKDQTNHIESDSILNLLNILTTHLSHPGTNKDMILKLVCQVTKFGLLLQVSAQERKDFLKKVMDTIQDKLINDVTAIQTWSYLSLYSTDLENSSLFQEKLLETNVSKQNDFLFSVGESLSVVAGKWSSKYLIKQIDIPNFNVEIMQQKFPATNVTTILDEIFSGCDSTKPSLRKASCIWLLSYIQYLGHLPEVSSKCNDIHLRFMRFLADRDEFIQDSAARGLSLVYEIGGSDLKESMVKGLLKSFTESTAGSASTSATGISGSVSEETELFEPGVLNTGDGSISTYKDILNLASEVGDPALVYKFMSLAKSSALWSSRKGIAFGLGAIMSKSSLEELLLKDQQTAKKLIPKLYRYRFDPFQAVSRSMTDIWNTLIPESSLTISLYFNDILDELLCGMANKEWRVREASTSALLQLIQSQPQEKFSEKMLKIWTMAFRTMDDIKDSVREVGTKFTTVLAKILARSIDVEKGVNPTKSKEILDNILPFLWGPHGLNSDAEEVRNFALTTLIDLVKHSPGAIKPFTPKLIYDFITLFSSIEPQVINYLALNAANYNIDANVIDTQRKNGVTNSPLFQTIEKLINNSDDCMMEEIINVVIKASRKSVGLPSKVASSLVIIILVKRYSIEMKPYSGKLLKVCLTMFEDRNESVNIAFAISMGYLFKVSALDKCIKYSEKLITKYFEPTSTENNKKVVGTAIDSILNYAKSEFDNVASVFMPLIFIACNDEDKDLETLYNKIWTEASSSGAGTVKLYLPEILNVLCVNIKSNDFSIRKTCAKSVIQLCGGINDSIPYPQIVKLFDISREALSGRSWDGKEHIVAALVSLTEKFSQTVADNNDLQESINHVMYTEVSRKSMKYVKKILPLYARYINVNPQEETITFLIEKAKEMIRLLGSESDDSEGSIKQTSDESTIKRIKPNTEITQKSSKENIENEEYVINLLKVSVDICNNSKSRYPMNLLEFIIDEIAYLFHNDRIIHTWRTQLAASEIGISIVGRFSTISSADFIQNVGRLWDQTFPINCNKETIENVKLQMIKFGGLIIQKIPSLQNNIEENLRLLNSIDSTSRIELELKNIGL.

Ser-2 carries the post-translational modification N-acetylserine. 22 HEAT repeats span residues 32–69, 116–153, 256–292, 313–351, 384–422, 439–476, 590–627, 707–745, 748–780, 781–818, 846–885, 945–982, 988–1025, 1030–1067, 1137–1174, 1178–1215, 1272–1311, 1361–1398, 1422–1459, 1503–1540, 1544–1581, and 1649–1687; these read TNLQ…RINT, QDRQ…EWVA, PRMI…PYEN, PVKA…HSSE, DFST…LQRQ, VSDL…HLSI, PPFR…QCLI, SVLL…LSDN, AVCA…QTMA, ETYV…THLS, QERK…DLEN, TNVT…YLGH, SKCN…IGGS, SMVK…LFEP, QTAK…ESSL, LYFN…SQPQ, EILD…HSPG, VTNS…KSVG, PYSG…VSAL, NVAS…SGAG, LYLP…GIND, and KYVK…LLGS. Position 1692 is a phosphoserine (Ser-1692). HEAT repeat units lie at residues 1746–1785 and 1830–1867; these read RYPM…GISI and GLII…KNIG.

Belongs to the ECM29 family. As to quaternary structure, component of the proteasome. ECM29 binds to both proteasome 19S and 20S particles.

The protein resides in the cytoplasm. It localises to the nucleus. Its function is as follows. Stabilizes the proteasome holoenzyme, probably by tethering the 20S proteolytic core particle and the 19S regulatory particle. The proteasome is a multicatalytic proteinase complex which is characterized by its ability to cleave peptides with Arg, Phe, Tyr, Leu, and Glu adjacent to the leaving group at neutral or slightly basic pH. The proteasome has an ATP-dependent proteolytic activity. In Saccharomyces cerevisiae (strain ATCC 204508 / S288c) (Baker's yeast), this protein is Proteasome component ECM29 (ECM29).